Here is a 1187-residue protein sequence, read N- to C-terminus: Tyrosine-protein phosphatase non-receptor type 14 (1187 aa).

Positions 21-306 constitute an FERM domain; sequence FVTRIRLLDS…TRHKFYKQNK (286 aa). 3 positions are modified to phosphoserine: Ser314, Ser461, and Ser486. Over residues 510–524 the composition is skewed to polar residues; it reads LVSPSDQRNPKNNVV. Residues 510-531 are disordered; sequence LVSPSDQRNPKNNVVPSKPGAS. Phosphoserine occurs at positions 591, 593, 594, and 642. Disordered stretches follow at residues 671-690 and 787-824; these read LREQGPPEEGSGSHEVPQLP and KAISMSRTDPPAVNGASLGPSISEPDLTSVKERVKKEP. Over residues 815 to 824 the composition is skewed to basic and acidic residues; sequence SVKERVKKEP. Ser831 carries the post-translational modification Phosphoserine. The 272-residue stretch at 909–1180 folds into the Tyrosine-protein phosphatase domain; the sequence is VFTEYEQIPK…KFVYQVLIQF (272 aa). Substrate contacts are provided by residues Asp1079, 1121-1127, and Gln1165; that span reads CSAGVGR. Cys1121 serves as the catalytic Phosphocysteine intermediate.

It belongs to the protein-tyrosine phosphatase family. Non-receptor class subfamily. Interacts with FLT4; the interaction is enhanced by stimulation with VEGFC. Interacts (via PPxY motifs) with YAP1 (via WW domains); this interaction leads to the cytoplasmic sequestration of YAP1 and inhibits its transcriptional co-activator activity. Ubiquitinated by the ECS (Elongin BC-CUL2/5-SOCS-box protein)/LRR1 E3 ligase complex and subsequently targeted to proteasomal degradation. In terms of tissue distribution, ubiquitous.

It is found in the cytoplasm. It localises to the cytoskeleton. Its subcellular location is the nucleus. It catalyses the reaction O-phospho-L-tyrosyl-[protein] + H2O = L-tyrosyl-[protein] + phosphate. In terms of biological role, protein tyrosine phosphatase which may play a role in the regulation of lymphangiogenesis, cell-cell adhesion, cell-matrix adhesion, cell migration, cell growth and also regulates TGF-beta gene expression, thereby modulating epithelial-mesenchymal transition. Mediates beta-catenin dephosphorylation at adhesion junctions. Acts as a negative regulator of the oncogenic property of YAP, a downstream target of the hippo pathway, in a cell density-dependent manner. May function as a tumor suppressor. This chain is Tyrosine-protein phosphatase non-receptor type 14 (PTPN14), found in Homo sapiens (Human).